Reading from the N-terminus, the 511-residue chain is Coatomer subunit delta (511 aa).

Over residues 168–177 the composition is skewed to basic and acidic residues; the sequence is QARRDAERQG. Residues 168 to 196 form a disordered region; sequence QARRDAERQGKKAPGFGGFGSSTVSGGST. Serine 223 is modified (phosphoserine). N6-acetyllysine occurs at positions 233 and 241. The residue at position 244 (serine 244) is a Phosphoserine. The 241-residue stretch at 271 to 511 folds into the MHD domain; the sequence is MESVHMKIEE…TFLVDKYEIL (241 aa). 2 positions are modified to N6-acetyllysine: lysine 309 and lysine 351. Serine 493 carries the phosphoserine modification.

The protein belongs to the adaptor complexes medium subunit family. Delta-COP subfamily. As to quaternary structure, oligomeric complex that consists of at least the alpha, beta, beta', gamma, delta, epsilon and zeta subunits. Ubiquitously expressed.

It is found in the cytoplasm. It localises to the golgi apparatus membrane. The protein localises to the cytoplasmic vesicle. The protein resides in the COPI-coated vesicle membrane. Functionally, the coatomer is a cytosolic protein complex that binds to dilysine motifs and reversibly associates with Golgi non-clathrin-coated vesicles, which further mediate biosynthetic protein transport from the ER, via the Golgi up to the trans Golgi network. Coatomer complex is required for budding from Golgi membranes, and is essential for the retrograde Golgi-to-ER transport of dilysine-tagged proteins. In mammals, the coatomer can only be recruited by membranes associated to ADP-ribosylation factors (ARFs), which are small GTP-binding proteins; the complex also influences the Golgi structural integrity, as well as the processing, activity, and endocytic recycling of LDL receptors. The sequence is that of Coatomer subunit delta (ARCN1) from Bos taurus (Bovine).